Here is a 334-residue protein sequence, read N- to C-terminus: UDP-glucose 4-epimerase (334 aa).

NAD(+) contacts are provided by residues 11–12 (YI), 31–36 (DNLQKG), 50–51 (DI), 72–76 (FAANS), Asn91, Thr116, Tyr140, Lys144, and Phe168. Thr116 and Tyr140 together coordinate substrate. Tyr140 serves as the catalytic Proton acceptor. Substrate is bound by residues Asn169, 188 to 189 (HL), 205 to 207 (AIF), Arg220, and 281 to 284 (RSGD).

It belongs to the NAD(P)-dependent epimerase/dehydratase family. Homodimer. It depends on NAD(+) as a cofactor.

It catalyses the reaction UDP-alpha-D-glucose = UDP-alpha-D-galactose. The protein operates within carbohydrate metabolism; galactose metabolism. Its function is as follows. Involved in the metabolism of galactose. Catalyzes the conversion of UDP-galactose (UDP-Gal) to UDP-glucose (UDP-Glc) through a mechanism involving the transient reduction of NAD. The protein is UDP-glucose 4-epimerase (galE) of Halalkalibacterium halodurans (strain ATCC BAA-125 / DSM 18197 / FERM 7344 / JCM 9153 / C-125) (Bacillus halodurans).